The primary structure comprises 176 residues: Superoxide oxidase CybB (176 aa).

Over 1 to 7 the chain is Cytoplasmic; the sequence is MENKYSR. The helical transmembrane segment at 8–29 threads the bilayer; that stretch reads LQISIHWLVFLLVIAAYCAMEF. H13 serves as a coordination point for heme b. The Periplasmic segment spans residues 30 to 39; sequence RGFFPRSDRP. A helical membrane pass occupies residues 40–64; the sequence is LINMIHVSCGISILVLMVVRLLLRL. H45 provides a ligand contact to heme b. The Cytoplasmic segment spans residues 65–77; it reads KYPTPPIIPKPKP. The chain crosses the membrane as a helical span at residues 78 to 103; that stretch reads MMTGLAHLGHLVIYLLFIALPVIGLV. At 104–135 the chain is on the periplasmic side; that stretch reads MMYNRGNPWFAFGLTMPYASEANFERVDSLKS. The chain crosses the membrane as a helical span at residues 136–158; the sequence is WHETLANLGYFVIGLHAAAALAH. H137 and H151 together coordinate heme b. The Cytoplasmic segment spans residues 159–176; it reads HYFWKDNTLLRMMPRKRS.

Belongs to the cytochrome b561 family. Monomer. Requires heme b as cofactor.

The protein resides in the cell inner membrane. The enzyme catalyses a ubiquinol + 2 O2 = 2 superoxide + a ubiquinone + 2 H(+). It catalyses the reaction a menaquinol + 2 O2 = 2 superoxide + a menaquinone + 2 H(+). Quinone binding to the enzyme accelerates the reaction with superoxide. In terms of biological role, B-type di-heme cytochrome. Catalyzes the oxidation of superoxide to molecular oxygen and transfers the extracted electrons to ubiquinone through the two hemes. Can also use menaquinone. The enzyme may be responsible for the detoxification of the superoxide anion produced in the membrane or at its surface. However, it can also efficiently catalyze the formation of superoxide from ubiquinol under physiological conditions. The sequence is that of Superoxide oxidase CybB from Escherichia coli (strain K12).